The primary structure comprises 214 residues: Ribosomal RNA small subunit methyltransferase G (214 aa).

S-adenosyl-L-methionine-binding positions include G81, M86, 132 to 133 (VE), and R147.

It belongs to the methyltransferase superfamily. RNA methyltransferase RsmG family.

Its subcellular location is the cytoplasm. It carries out the reaction guanosine(527) in 16S rRNA + S-adenosyl-L-methionine = N(7)-methylguanosine(527) in 16S rRNA + S-adenosyl-L-homocysteine. Specifically methylates the N7 position of guanine in position 527 of 16S rRNA. This is Ribosomal RNA small subunit methyltransferase G from Pseudomonas aeruginosa (strain LESB58).